We begin with the raw amino-acid sequence, 116 residues long: Ribonuclease P protein component (116 aa).

This sequence belongs to the RnpA family. As to quaternary structure, consists of a catalytic RNA component (M1 or rnpB) and a protein subunit.

It carries out the reaction Endonucleolytic cleavage of RNA, removing 5'-extranucleotides from tRNA precursor.. RNaseP catalyzes the removal of the 5'-leader sequence from pre-tRNA to produce the mature 5'-terminus. It can also cleave other RNA substrates such as 4.5S RNA. The protein component plays an auxiliary but essential role in vivo by binding to the 5'-leader sequence and broadening the substrate specificity of the ribozyme. The polypeptide is Ribonuclease P protein component (Leuconostoc mesenteroides subsp. mesenteroides (strain ATCC 8293 / DSM 20343 / BCRC 11652 / CCM 1803 / JCM 6124 / NCDO 523 / NBRC 100496 / NCIMB 8023 / NCTC 12954 / NRRL B-1118 / 37Y)).